We begin with the raw amino-acid sequence, 272 residues long: Ethanolamine ammonia-lyase small subunit (272 aa).

Residues Val-161, Glu-182, and Cys-211 each coordinate adenosylcob(III)alamin.

It belongs to the EutC family. In terms of assembly, the basic unit is a heterodimer which dimerizes to form tetramers. The heterotetramers trimerize; 6 large subunits form a core ring with 6 small subunits projecting outwards. It depends on adenosylcob(III)alamin as a cofactor.

Its subcellular location is the bacterial microcompartment. The enzyme catalyses ethanolamine = acetaldehyde + NH4(+). Its pathway is amine and polyamine degradation; ethanolamine degradation. Its function is as follows. Catalyzes the deamination of various vicinal amino-alcohols to oxo compounds. Allows this organism to utilize ethanolamine as the sole source of nitrogen and carbon in the presence of external vitamin B12. This Xanthomonas campestris pv. campestris (strain ATCC 33913 / DSM 3586 / NCPPB 528 / LMG 568 / P 25) protein is Ethanolamine ammonia-lyase small subunit.